A 208-amino-acid chain; its full sequence is Anthranilate synthase component 2 (208 aa).

One can recognise a Glutamine amidotransferase type-1 domain in the interval 3–208 (HVVLIDNHDS…SRCVEQLLAN (206 aa)). L-glutamine is bound at residue 53-55 (GPG). Cys80 functions as the Nucleophile; for GATase activity in the catalytic mechanism. Residues Gln84 and 145–146 (SL) contribute to the L-glutamine site. Active-site for GATase activity residues include His185 and Glu187.

As to quaternary structure, heterotetramer consisting of two non-identical subunits: a beta subunit (TrpG) and a large alpha subunit (TrpE).

The catalysed reaction is chorismate + L-glutamine = anthranilate + pyruvate + L-glutamate + H(+). Its pathway is amino-acid biosynthesis; L-tryptophan biosynthesis; L-tryptophan from chorismate: step 1/5. Its function is as follows. Part of a heterotetrameric complex that catalyzes the two-step biosynthesis of anthranilate, an intermediate in the biosynthesis of L-tryptophan. In the first step, the glutamine-binding beta subunit (TrpG) of anthranilate synthase (AS) provides the glutamine amidotransferase activity which generates ammonia as a substrate that, along with chorismate, is used in the second step, catalyzed by the large alpha subunit of AS (TrpE) to produce anthranilate. In the absence of TrpG, TrpE can synthesize anthranilate directly from chorismate and high concentrations of ammonia. This chain is Anthranilate synthase component 2 (trpG), found in Corynebacterium glutamicum (strain ATCC 13032 / DSM 20300 / JCM 1318 / BCRC 11384 / CCUG 27702 / LMG 3730 / NBRC 12168 / NCIMB 10025 / NRRL B-2784 / 534).